The chain runs to 260 residues: Thiamine thiazole synthase (260 aa).

NAD(+)-binding positions include Ala-36, 55-56, Gly-63, and 154-156; these read EQ and HVD. Positions 156 and 171 each coordinate Fe cation. NAD(+) is bound at residue Met-224. A glycine-binding site is contributed by Arg-234.

This sequence belongs to the THI4 family. In terms of assembly, homooctamer; tetramer of dimers. The cofactor is Fe(2+).

The catalysed reaction is hydrogen sulfide + glycine + NAD(+) = ADP-5-ethyl-4-methylthiazole-2-carboxylate + nicotinamide + 3 H2O + H(+). It participates in cofactor biosynthesis; thiamine diphosphate biosynthesis. Its function is as follows. Involved in the biosynthesis of the thiazole moiety of thiamine. Catalyzes the conversion of NAD and glycine to adenosine diphosphate 5-(2-hydroxyethyl)-4-methylthiazole-2-carboxylate (ADT), an adenylated thiazole intermediate, using free sulfide as a source of sulfur. The chain is Thiamine thiazole synthase from Methanosarcina acetivorans (strain ATCC 35395 / DSM 2834 / JCM 12185 / C2A).